A 71-amino-acid polypeptide reads, in one-letter code: Long neurotoxin 3 (71 aa).

Disulfide bonds link Cys3–Cys20, Cys14–Cys41, Cys26–Cys30, Cys45–Cys56, and Cys57–Cys62.

Belongs to the three-finger toxin family. Long-chain subfamily. Type II alpha-neurotoxin sub-subfamily. As to expression, expressed by the venom gland.

The protein localises to the secreted. Its function is as follows. Binds with high affinity to muscular (alpha-1/CHRNA1) and neuronal (alpha-7/CHRNA7) nicotinic acetylcholine receptor (nAChR) and inhibits acetylcholine from binding to the receptor, thereby impairing neuromuscular and neuronal transmission. The chain is Long neurotoxin 3 from Naja naja (Indian cobra).